Consider the following 519-residue polypeptide: Cytochrome P450 4A11 (519 aa).

Positions 1–4 are excised as a propeptide; the sequence is MSVS. Heme is bound at residue Glu321. Residue Ser440 is modified to Phosphoserine. Cys457 serves as a coordination point for heme.

Belongs to the cytochrome P450 family. It depends on heme as a cofactor. Expressed in liver. Expressed in S2 and S3 segments of proximal tubules in cortex and outer medulla of kidney.

It is found in the endoplasmic reticulum membrane. The protein localises to the microsome membrane. It carries out the reaction an organic molecule + reduced [NADPH--hemoprotein reductase] + O2 = an alcohol + oxidized [NADPH--hemoprotein reductase] + H2O + H(+). The enzyme catalyses an omega-methyl-long-chain fatty acid + reduced [NADPH--hemoprotein reductase] + O2 = an omega-hydroxy-long-chain fatty acid + oxidized [NADPH--hemoprotein reductase] + H2O + H(+). The catalysed reaction is dodecanoate + reduced [NADPH--hemoprotein reductase] + O2 = 12-hydroxydodecanoate + oxidized [NADPH--hemoprotein reductase] + H2O + H(+). It catalyses the reaction tetradecanoate + reduced [NADPH--hemoprotein reductase] + O2 = 14-hydroxytetradecanoate + oxidized [NADPH--hemoprotein reductase] + H2O + H(+). It carries out the reaction hexadecanoate + reduced [NADPH--hemoprotein reductase] + O2 = 16-hydroxyhexadecanoate + oxidized [NADPH--hemoprotein reductase] + H2O + H(+). The enzyme catalyses (9Z)-octadecenoate + reduced [NADPH--hemoprotein reductase] + O2 = 18-hydroxy-(9Z)-octadecenoate + oxidized [NADPH--hemoprotein reductase] + H2O + H(+). The catalysed reaction is (5Z,8Z,11Z,14Z)-eicosatetraenoate + reduced [NADPH--hemoprotein reductase] + O2 = 20-hydroxy-(5Z,8Z,11Z,14Z)-eicosatetraenoate + oxidized [NADPH--hemoprotein reductase] + H2O + H(+). It catalyses the reaction 22-hydroxydocosanoate + reduced [NADPH--hemoprotein reductase] + O2 = 22-oxodocosanoate + oxidized [NADPH--hemoprotein reductase] + 2 H2O + H(+). It carries out the reaction 22-oxodocosanoate + reduced [NADPH--hemoprotein reductase] + O2 = docosanedioate + oxidized [NADPH--hemoprotein reductase] + H2O + 2 H(+). The enzyme catalyses (9R,10S)-epoxy-octadecanoate + reduced [NADPH--hemoprotein reductase] + O2 = 18-hydroxy-(9R,10S)-epoxy-octadecanoate + oxidized [NADPH--hemoprotein reductase] + H2O + H(+). The catalysed reaction is 3-hydroxyhexadecanoate + reduced [NADPH--hemoprotein reductase] + O2 = 3,16-dihydroxyhexadecanoate + oxidized [NADPH--hemoprotein reductase] + H2O + H(+). It functions in the pathway lipid metabolism; arachidonate metabolism. It participates in lipid metabolism; oxylipin biosynthesis. Activated by cytochrome b5. A cytochrome P450 monooxygenase involved in the metabolism of fatty acids and their oxygenated derivatives (oxylipins). Mechanistically, uses molecular oxygen inserting one oxygen atom into a substrate, and reducing the second into a water molecule, with two electrons provided by NADPH via cytochrome P450 reductase (CPR; NADPH-ferrihemoprotein reductase). Catalyzes predominantly the oxidation of the terminal carbon (omega-oxidation) of saturated and unsaturated fatty acids, the catalytic efficiency decreasing in the following order: dodecanoic &gt; tetradecanoic &gt; (9Z)-octadecenoic &gt; (9Z,12Z)-octadecadienoic &gt; hexadecanoic acid. Acts as a major omega-hydroxylase for dodecanoic (lauric) acid in liver. Participates in omega-hydroxylation of (5Z,8Z,11Z,14Z)-eicosatetraenoic acid (arachidonate) to 20-hydroxyeicosatetraenoic acid (20-HETE), a signaling molecule acting both as vasoconstrictive and natriuretic with overall effect on arterial blood pressure. Can also catalyze the oxidation of the penultimate carbon (omega-1 oxidation) of fatty acids with lower efficiency. May contribute to the degradation of saturated very long-chain fatty acids (VLCFAs) such as docosanoic acid, by catalyzing successive omega-oxidations to the corresponding dicarboxylic acid, thereby initiating chain shortening. Omega-hydroxylates (9R,10S)-epoxy-octadecanoate stereoisomer. Plays a minor role in omega-oxidation of long-chain 3-hydroxy fatty acids. Has little activity toward prostaglandins A1 and E1. The protein is Cytochrome P450 4A11 of Homo sapiens (Human).